The primary structure comprises 638 residues: Probable potassium transport system protein Kup (638 aa).

12 consecutive transmembrane segments (helical) span residues 25-45 (LAIA…LYSL), 65-85 (VISL…LLFV), 114-134 (AGAL…DAVI), 152-172 (PHLS…LFWI), 184-204 (FGPI…YHIV), 226-246 (LLQA…AEAL), 262-282 (AYGL…ALLI), 291-311 (PFFL…STVA), 352-372 (IYVP…VIGF), 382-402 (YGIA…VVMV), 410-430 (LLVG…FGAN), and 434-454 (VAQG…LLMT).

Belongs to the HAK/KUP transporter (TC 2.A.72) family.

It localises to the cell inner membrane. The catalysed reaction is K(+)(in) + H(+)(in) = K(+)(out) + H(+)(out). Transport of potassium into the cell. Likely operates as a K(+):H(+) symporter. This Burkholderia lata (strain ATCC 17760 / DSM 23089 / LMG 22485 / NCIMB 9086 / R18194 / 383) protein is Probable potassium transport system protein Kup.